We begin with the raw amino-acid sequence, 409 residues long: Protein naked cuticle homolog 2-like (409 aa).

A lipid anchor (N-myristoyl glycine) is attached at glycine 2. The EF-hand domain occupies alanine 109–valine 144. The Ca(2+) site is built by aspartate 122, aspartate 124, serine 126, lysine 128, and aspartate 133. Disordered regions lie at residues valine 166–aspartate 224, threonine 243–glycine 315, asparagine 346–arginine 367, and arginine 388–threonine 409. Basic and acidic residues-rich tracts occupy residues alanine 171–serine 185 and valine 193–aspartate 224. Residues aspartate 247–proline 268 show a composition bias toward low complexity. Positions histidine 389–threonine 409 are enriched in basic residues.

Belongs to the NKD family.

The protein localises to the cell membrane. Its subcellular location is the cytoplasm. Functionally, cell autonomous antagonist of both the canonical and non-canonical Wnt signaling pathways. The protein is Protein naked cuticle homolog 2-like (nkd2l) of Danio rerio (Zebrafish).